The chain runs to 901 residues: Flowering time control protein FPA (901 aa).

RRM domains are found at residues 18–90, 95–166, and 206–281; these read NNLW…YARP, KSLW…FLRS, and KVLW…YSND. Residues 343-416 are disordered; it reads VGKEPNWRRP…SVDGFTPMGV (74 aa). The SPOC domain maps to 441 to 537; it reads WRGMIAKGGT…DDGTTLFLVP (97 aa). The disordered stretch occupies residues 655-736; that stretch reads SQPAAPESHQ…YPPASNNPNY (82 aa). Polar residues-rich tracts occupy residues 664–682 and 700–716; these read QPMS…SNGL and HDAS…QYTP.

Belongs to the RRM Spen family. In terms of tissue distribution, expressed in roots, leaves, stems and flowers. Highest expression in flower stems and meristematic regions.

The protein resides in the nucleus. Plays a role in the regulation of flowering time in the autonomous flowering pathway by decreasing FLOWERING LOCUS C mRNA levels. Required for RNA-mediated chromatin silencing of a range of loci in the genome. Cotranscriptionally recognizes aberrant RNA and marks it for silencing. Controls alternative cleavage and polyadenylation on pre-mRNAs and antisense RNAs. Acts redundantly with FCA to prevent the expression of distally polyadenylated antisense RNAs at the FLC locus. The chain is Flowering time control protein FPA (FPA) from Arabidopsis thaliana (Mouse-ear cress).